The chain runs to 558 residues: Inositol-3-phosphate synthase (558 aa).

Residues Met-1–Glu-34 are disordered. NAD(+) is bound by residues Gly-99, Gly-100, Asn-101, Asn-102, Asp-174, Ser-210, Ile-211, Gln-221, Arg-224, Thr-262, Ala-263, Asn-264, Thr-265, Gly-313, Ser-314, Asp-338, Ser-341, Asn-372, Asn-373, Asp-374, Lys-387, Gly-439, Asp-440, Asp-468, and Ser-469.

It belongs to the myo-inositol 1-phosphate synthase family. As to quaternary structure, homotetramer. Requires NAD(+) as cofactor.

The protein resides in the cytoplasm. It catalyses the reaction D-glucose 6-phosphate = 1D-myo-inositol 3-phosphate. It functions in the pathway polyol metabolism; myo-inositol biosynthesis; myo-inositol from D-glucose 6-phosphate: step 1/2. In terms of biological role, key enzyme in myo-inositol biosynthesis pathway that catalyzes the conversion of glucose 6-phosphate to 1-myo-inositol 1-phosphate in a NAD-dependent manner. Rate-limiting enzyme in the synthesis of all inositol-containing compounds. In Cryptococcus neoformans var. grubii serotype A (strain H99 / ATCC 208821 / CBS 10515 / FGSC 9487) (Filobasidiella neoformans var. grubii), this protein is Inositol-3-phosphate synthase.